A 320-amino-acid chain; its full sequence is Cytochrome f (320 aa).

The N-terminal stretch at 1-35 (MENKNTFSWVKEQMTRSISVSIMIYVITQTSISNA) is a signal peptide. Heme-binding residues include Tyr36, Cys56, Cys59, and His60. The helical transmembrane segment at 286 to 306 (VQGLLFFFASVILAQVFLVLK) threads the bilayer.

Belongs to the cytochrome f family. As to quaternary structure, the 4 large subunits of the cytochrome b6-f complex are cytochrome b6, subunit IV (17 kDa polypeptide, petD), cytochrome f and the Rieske protein, while the 4 small subunits are PetG, PetL, PetM and PetN. The complex functions as a dimer. Heme is required as a cofactor.

The protein localises to the plastid. Its subcellular location is the chloroplast thylakoid membrane. Component of the cytochrome b6-f complex, which mediates electron transfer between photosystem II (PSII) and photosystem I (PSI), cyclic electron flow around PSI, and state transitions. This Lolium perenne (Perennial ryegrass) protein is Cytochrome f.